A 242-amino-acid chain; its full sequence is Endoglucanase (242 aa).

The signal sequence occupies residues 1–21 (MQVIVLPLVFLATFATSGSLA). The active-site Nucleophile is the aspartate 47. N-linked (GlcNAc...) asparagine glycosylation is found at asparagine 79, asparagine 103, and asparagine 217.

Belongs to the glycosyl hydrolase 45 (cellulase K) family. In terms of tissue distribution, expressed in larval carcasses and gut, and adult gut.

The protein localises to the secreted. The catalysed reaction is Endohydrolysis of (1-&gt;4)-beta-D-glucosidic linkages in cellulose, lichenin and cereal beta-D-glucans.. This is Endoglucanase from Phaedon cochleariae (Mustard beetle).